Reading from the N-terminus, the 418-residue chain is Deubiquitinase and deneddylase Dub1 (418 aa).

Polar residues predominate over residues 1-11 (MLSPTNSTSKT). Residues 1–23 (MLSPTNSTSKTAPVPPQDSSKPV) are disordered. Residues 40 to 60 (TALVVLLVVVTLGLILLFYSF) form a helical membrane-spanning segment. The segment at 72–145 (TRPSTKEQPT…LPPKAPKPVK (74 aa)) is disordered. Over residues 86–141 (VPLPSPPLAVPRPSTPPPPVISRPSMPPAPTPAISPPSTPSAPKPSTPPPLPPKAP) the composition is skewed to pro residues. Active-site residues include His288, Asp305, and Cys358.

This sequence belongs to the peptidase C48 family.

Its subcellular location is the secreted. The protein localises to the host cell. It localises to the membrane. Effector proteins function to alter host cell physiology and promote bacterial survival in host tissues. This protease possesses deubiquitinating and deneddylating activities. This Chlamydia trachomatis serovar E (strain Sweden2) protein is Deubiquitinase and deneddylase Dub1 (cdu1).